The following is a 422-amino-acid chain: Serine--tRNA ligase (422 aa).

Residue 229 to 231 (TAE) coordinates L-serine. 260–262 (RKE) contacts ATP. Glu283 contacts L-serine. Position 347–350 (347–350 (EISS)) interacts with ATP. Ser383 contacts L-serine.

The protein belongs to the class-II aminoacyl-tRNA synthetase family. Type-1 seryl-tRNA synthetase subfamily. Homodimer. The tRNA molecule binds across the dimer.

The protein resides in the cytoplasm. The enzyme catalyses tRNA(Ser) + L-serine + ATP = L-seryl-tRNA(Ser) + AMP + diphosphate + H(+). It catalyses the reaction tRNA(Sec) + L-serine + ATP = L-seryl-tRNA(Sec) + AMP + diphosphate + H(+). The protein operates within aminoacyl-tRNA biosynthesis; selenocysteinyl-tRNA(Sec) biosynthesis; L-seryl-tRNA(Sec) from L-serine and tRNA(Sec): step 1/1. Its function is as follows. Catalyzes the attachment of serine to tRNA(Ser). Is also able to aminoacylate tRNA(Sec) with serine, to form the misacylated tRNA L-seryl-tRNA(Sec), which will be further converted into selenocysteinyl-tRNA(Sec). This Geotalea uraniireducens (strain Rf4) (Geobacter uraniireducens) protein is Serine--tRNA ligase.